We begin with the raw amino-acid sequence, 218 residues long: Capsid protein (218 aa).

Met-1 carries the N-acetylmethionine; by host modification. The disordered stretch occupies residues 1–28; that stretch reads MDKSESTSAGRNRRRRPRRGSRSAPSSA. Basic residues predominate over residues 11–21; sequence RNRRRRPRRGS.

The protein belongs to the cucumovirus capsid protein family.

The protein localises to the virion. In terms of biological role, capsid protein. Probably binds RNA and plays a role in packaging. The sequence is that of Capsid protein from Cucumis sativus (Cucumber).